The primary structure comprises 219 residues: Ribose-5-phosphate isomerase A (219 aa).

Residues S28–T31, D81–D84, and K94–G97 each bind substrate. The Proton acceptor role is filled by E103. Residue K121 coordinates substrate.

This sequence belongs to the ribose 5-phosphate isomerase family. As to quaternary structure, homodimer.

It carries out the reaction aldehydo-D-ribose 5-phosphate = D-ribulose 5-phosphate. It participates in carbohydrate degradation; pentose phosphate pathway; D-ribose 5-phosphate from D-ribulose 5-phosphate (non-oxidative stage): step 1/1. Functionally, catalyzes the reversible conversion of ribose-5-phosphate to ribulose 5-phosphate. The protein is Ribose-5-phosphate isomerase A of Haemophilus influenzae (strain 86-028NP).